Here is a 444-residue protein sequence, read N- to C-terminus: Acyl-CoA 6-desaturase (444 aa).

The Cytoplasmic portion of the chain corresponds to 1 to 122 (MGKGGNQDEG…FRALRKTAED (122 aa)). The Cytochrome b5 heme-binding domain maps to 18 to 95 (MPTFRWEEIQ…MKPLLIGELA (78 aa)). A helical transmembrane segment spans residues 123–143 (MNLFKSNQLFFLLHLAHIIAM). The Lumenal portion of the chain corresponds to 144 to 147 (ESIA). Residues 148-168 (WFTLFYFGNGWIPTIITAFVL) form a helical membrane-spanning segment. The Cytoplasmic portion of the chain corresponds to 169–264 (ATSQAQAGWL…KYLPYNHQHE (96 aa)). The Histidine box-1 motif lies at 180 to 184 (HDYGH). Residues 217–221 (HFQHH) carry the Histidine box-2 motif. A helical transmembrane segment spans residues 265–285 (YFFLIGPPLLIPLYFQYQIIM). At 286–305 (TMIVRKYWADLAWAISYYTR) the chain is on the lumenal side. Residues 306–326 (FFITYIPFYGVLGSILFLNFI) traverse the membrane as a helical segment. At 327–444 (RFLESHWFVW…QLWLDAYLHK (118 aa)) the chain is on the cytoplasmic side. A Histidine box-3 motif is present at residues 382 to 386 (QIEHH).

It belongs to the fatty acid desaturase type 1 family.

It localises to the endoplasmic reticulum membrane. It catalyses the reaction (9Z,12Z)-octadecadienoyl-CoA + 2 Fe(II)-[cytochrome b5] + O2 + 2 H(+) = (6Z,9Z,12Z)-octadecatrienoyl-CoA + 2 Fe(III)-[cytochrome b5] + 2 H2O. The catalysed reaction is (9Z,12Z,15Z)-octadecatrienoyl-CoA + 2 Fe(II)-[cytochrome b5] + O2 + 2 H(+) = (6Z,9Z,12Z,15Z)-octadecatetraenoyl-CoA + 2 Fe(III)-[cytochrome b5] + 2 H2O. It carries out the reaction (9Z,12Z,15Z,18Z,21Z)-tetracosapentaenoyl-CoA + 2 Fe(II)-[cytochrome b5] + O2 + 2 H(+) = (6Z,9Z,12Z,15Z,18Z,21Z)-tetracosahexaenoyl-CoA + 2 Fe(III)-[cytochrome b5] + 2 H2O. The enzyme catalyses (11E)-octadecenoyl-CoA + 2 Fe(II)-[cytochrome b5] + O2 + 2 H(+) = (6Z,11E)-octadecadienoyl-CoA + 2 Fe(III)-[cytochrome b5] + 2 H2O. It catalyses the reaction (11Z,14Z)-eicosadienoyl-CoA + 2 Fe(II)-[cytochrome b5] + O2 + 2 H(+) = (8Z,11Z,14Z)-eicosatrienoyl-CoA + 2 Fe(III)-[cytochrome b5] + 2 H2O. The catalysed reaction is (11Z,14Z,17Z)-eicosatrienoyl-CoA + 2 Fe(II)-[cytochrome b5] + O2 + 2 H(+) = (8Z,11Z,14Z,17Z)-eicosatetraenoyl-CoA + 2 Fe(III)-[cytochrome b5] + 2 H2O. The protein operates within lipid metabolism; polyunsaturated fatty acid biosynthesis. Its function is as follows. Involved in the biosynthesis of highly unsaturated fatty acids (HUFA) from the essential polyunsaturated fatty acids (PUFA) linoleic acid (LA) (18:2n-6) and alpha-linolenic acid (ALA) (18:3n-3) precursors, acting as a fatty acyl-coenzyme A (CoA) desaturase that introduces a cis double bond at carbon 6 of the fatty acyl chain. Catalyzes the first and rate limiting step in this pathway which is the desaturation of LA (18:2n-6) and ALA (18:3n-3) into gamma-linoleate (GLA) (18:3n-6) and stearidonate (18:4n-3), respectively. Subsequently, in the biosynthetic pathway of HUFA n-3 series, it desaturates tetracosapentaenoate (24:5n-3) to tetracosahexaenoate (24:6n-3), which is then converted to docosahexaenoate (DHA)(22:6n-3), an important lipid for nervous system function. It can also desaturate (11E)-octadecenoate (trans-vaccenoate, a metabolite in the biohydrogenation pathway of LA and the predominant trans fatty acid in cow milk) at carbon 6 generating (6Z,11E)-octadecadienoate. In addition to Delta-6 activity, this enzyme exhibits Delta-8 activity with slight biases toward n-3 fatty acyl-CoA substrates. This chain is Acyl-CoA 6-desaturase (FADS2), found in Bos taurus (Bovine).